Reading from the N-terminus, the 130-residue chain is Endoglucanase 2 (130 aa).

Catalysis depends on residues H47, D98, and E107.

It belongs to the glycosyl hydrolase 9 (cellulase E) family.

The enzyme catalyses Endohydrolysis of (1-&gt;4)-beta-D-glucosidic linkages in cellulose, lichenin and cereal beta-D-glucans.. Involved in ripening fruit process. The chain is Endoglucanase 2 (CEL2) from Persea americana (Avocado).